Consider the following 831-residue polypeptide: Prickle-like protein 1 (831 aa).

A PET domain is found at 14–122 (FGCQRSSTSD…TIKLLSRAVM (109 aa)). LIM zinc-binding domains lie at 124 to 189 (AVCE…LLKP), 189 to 249 (PRCS…LYAE), and 249 to 313 (EYCE…EDVH). The segment at 313–342 (HASDSSDSAFQSARSRDSRRSVRMGKSSRS) is disordered. A phosphoserine mark is found at S315, S591, and S594. Disordered stretches follow at residues 663 to 688 (FEERGSRSHHHRRRRSRKSRSDNALN) and 763 to 831 (CSSS…CIIS). Positions 669–680 (RSHHHRRRRSRK) are enriched in basic residues. S683 carries the post-translational modification Phosphoserine. A compositionally biased stretch (basic residues) spans 815 to 831 (TKSKKKKGHKGKNCIIS). C828 carries the cysteine methyl ester modification. C828 carries S-farnesyl cysteine lipidation. Residues 829 to 831 (IIS) constitute a propeptide, removed in mature form.

The protein belongs to the prickle / espinas / testin family. In terms of assembly, interacts with REST. As to expression, expressed at highest levels in placenta and at lower levels in lung, liver, kidney and pancreas. Expressed in thalamus, hippocampus, cerebral cortex, and cerebellum (in neurons rather than glia).

Its subcellular location is the nucleus membrane. It is found in the cytoplasm. The protein localises to the cytosol. Its function is as follows. Involved in the planar cell polarity pathway that controls convergent extension during gastrulation and neural tube closure. Convergent extension is a complex morphogenetic process during which cells elongate, move mediolaterally, and intercalate between neighboring cells, leading to convergence toward the mediolateral axis and extension along the anteroposterior axis. Necessary for nuclear localization of REST. May serve as nuclear receptor. The polypeptide is Prickle-like protein 1 (PRICKLE1) (Homo sapiens (Human)).